A 37-amino-acid polypeptide reads, in one-letter code: Large ribosomal subunit protein bL36c (37 aa).

This sequence belongs to the bacterial ribosomal protein bL36 family.

It localises to the plastid. The protein resides in the chloroplast. The sequence is that of Large ribosomal subunit protein bL36c (rpl36) from Anthoceros angustus (Hornwort).